Here is a 251-residue protein sequence, read N- to C-terminus: GTP cyclohydrolase 1 type 2 homolog (251 aa).

5 residues coordinate a divalent metal cation: His63, His64, Asp101, His219, and Glu223.

The protein belongs to the GTP cyclohydrolase I type 2/NIF3 family. Toroid-shaped homohexamer. In the hexamer, 3 dimers assemble to form a ring-like structure surrounding a central hole.

In Haemophilus influenzae (strain ATCC 51907 / DSM 11121 / KW20 / Rd), this protein is GTP cyclohydrolase 1 type 2 homolog.